The following is a 400-amino-acid chain: Argininosuccinate synthase (400 aa).

Residues 10–18 (AYSGGVDTS) and alanine 38 contribute to the ATP site. Tyrosine 89 is a binding site for L-citrulline. An ATP-binding site is contributed by glycine 119. Residues threonine 121, asparagine 125, and aspartate 126 each coordinate L-aspartate. Asparagine 125 lines the L-citrulline pocket. L-citrulline-binding residues include arginine 129, serine 177, serine 186, glutamate 262, and tyrosine 274.

This sequence belongs to the argininosuccinate synthase family. Type 1 subfamily. Homotetramer.

It localises to the cytoplasm. The catalysed reaction is L-citrulline + L-aspartate + ATP = 2-(N(omega)-L-arginino)succinate + AMP + diphosphate + H(+). It participates in amino-acid biosynthesis; L-arginine biosynthesis; L-arginine from L-ornithine and carbamoyl phosphate: step 2/3. The protein is Argininosuccinate synthase of Crocosphaera subtropica (strain ATCC 51142 / BH68) (Cyanothece sp. (strain ATCC 51142)).